Here is a 430-residue protein sequence, read N- to C-terminus: Serine--tRNA ligase (430 aa).

238–240 (TAE) contributes to the L-serine binding site. ATP is bound at residue 269 to 271 (RRE). Glu292 contributes to the L-serine binding site. 356 to 359 (EISS) is a binding site for ATP. Ser392 is an L-serine binding site.

The protein belongs to the class-II aminoacyl-tRNA synthetase family. Type-1 seryl-tRNA synthetase subfamily. In terms of assembly, homodimer. The tRNA molecule binds across the dimer.

It is found in the cytoplasm. It carries out the reaction tRNA(Ser) + L-serine + ATP = L-seryl-tRNA(Ser) + AMP + diphosphate + H(+). It catalyses the reaction tRNA(Sec) + L-serine + ATP = L-seryl-tRNA(Sec) + AMP + diphosphate + H(+). It participates in aminoacyl-tRNA biosynthesis; selenocysteinyl-tRNA(Sec) biosynthesis; L-seryl-tRNA(Sec) from L-serine and tRNA(Sec): step 1/1. Catalyzes the attachment of serine to tRNA(Ser). Is also able to aminoacylate tRNA(Sec) with serine, to form the misacylated tRNA L-seryl-tRNA(Sec), which will be further converted into selenocysteinyl-tRNA(Sec). The sequence is that of Serine--tRNA ligase from Synechocystis sp. (strain ATCC 27184 / PCC 6803 / Kazusa).